Here is a 112-residue protein sequence, read N- to C-terminus: U15-hexatoxin-Hi1a (112 aa).

A signal peptide spans 1 to 18 (MNTLIAFAVLLLLSTTLG). A propeptide spanning residues 19–73 (DTDDKVSHEEIQERKELSGISEELLLQQLEAVEAALMEKERLEEMEEDGNSREKR) is cleaved from the precursor. 3 cysteine pairs are disulfide-bonded: cysteine 74/cysteine 88, cysteine 81/cysteine 93, and cysteine 87/cysteine 107.

Belongs to the neurotoxin 14 (magi-1) family. 08 (Ltx-4) subfamily. In terms of tissue distribution, expressed by the venom gland.

Its subcellular location is the secreted. Probable ion channel inhibitor. The polypeptide is U15-hexatoxin-Hi1a (Hadronyche infensa (Fraser island funnel-web spider)).